Consider the following 31-residue polypeptide: Photosystem II reaction center protein T (31 aa).

The helical transmembrane segment at 3–23 threads the bilayer; sequence ALVYTFLLVGTLGIIFFAIFF.

Belongs to the PsbT family. As to quaternary structure, PSII is composed of 1 copy each of membrane proteins PsbA, PsbB, PsbC, PsbD, PsbE, PsbF, PsbH, PsbI, PsbJ, PsbK, PsbL, PsbM, PsbT, PsbY, PsbZ, Psb30/Ycf12, at least 3 peripheral proteins of the oxygen-evolving complex and a large number of cofactors. It forms dimeric complexes.

It localises to the plastid. It is found in the chloroplast thylakoid membrane. Functionally, found at the monomer-monomer interface of the photosystem II (PS II) dimer, plays a role in assembly and dimerization of PSII. PSII is a light-driven water plastoquinone oxidoreductase, using light energy to abstract electrons from H(2)O, generating a proton gradient subsequently used for ATP formation. The chain is Photosystem II reaction center protein T from Chlorella vulgaris (Green alga).